Here is a 213-residue protein sequence, read N- to C-terminus: Motile sperm domain-containing protein 1 (213 aa).

Residues 16 to 143 enclose the MSP domain; sequence PVFVFPTELI…KEHLTESVFF (128 aa). A run of 2 helical transmembrane segments spans residues 159–179 and 191–211; these read SLLTVFLGVVCIAALMLPTLG and LSVNQKLVAAYILGLITMAIL. The Nuclear export signal signature appears at 205-208; sequence LITM.

In terms of tissue distribution, widely expressed. Shows highest expression in ribs, and slightly lower levels of expression in heart, kidney, muscle, thymus, calvariae and lung. Also detected at low levels in spleen and liver.

The protein resides in the endoplasmic reticulum membrane. The protein localises to the golgi apparatus membrane. Functionally, plays a role in differentiation and/or proliferation of mesenchymal stem cells. Proposed to be involved in epithelial-to-mesenchymal transition (EMT). However, another study suggests that it is not required for EMT or stem cell self-renewal and acts during later stages of differentiation. In Mus musculus (Mouse), this protein is Motile sperm domain-containing protein 1 (Mospd1).